The following is a 95-amino-acid chain: Aspartyl/glutamyl-tRNA(Asn/Gln) amidotransferase subunit C (95 aa).

It belongs to the GatC family. Heterotrimer of A, B and C subunits.

The enzyme catalyses L-glutamyl-tRNA(Gln) + L-glutamine + ATP + H2O = L-glutaminyl-tRNA(Gln) + L-glutamate + ADP + phosphate + H(+). It catalyses the reaction L-aspartyl-tRNA(Asn) + L-glutamine + ATP + H2O = L-asparaginyl-tRNA(Asn) + L-glutamate + ADP + phosphate + 2 H(+). Its function is as follows. Allows the formation of correctly charged Asn-tRNA(Asn) or Gln-tRNA(Gln) through the transamidation of misacylated Asp-tRNA(Asn) or Glu-tRNA(Gln) in organisms which lack either or both of asparaginyl-tRNA or glutaminyl-tRNA synthetases. The reaction takes place in the presence of glutamine and ATP through an activated phospho-Asp-tRNA(Asn) or phospho-Glu-tRNA(Gln). This chain is Aspartyl/glutamyl-tRNA(Asn/Gln) amidotransferase subunit C, found in Thermoanaerobacter pseudethanolicus (strain ATCC 33223 / 39E) (Clostridium thermohydrosulfuricum).